We begin with the raw amino-acid sequence, 124 residues long: Fluoride-specific ion channel FluC (124 aa).

4 helical membrane passes run 1–21 (MIAL…LRFA), 37–57 (GTLA…GLFL), 69–89 (GLIV…LDTV), and 99–119 (LALG…WAGL). Na(+) is bound by residues Gly76 and Thr79.

It belongs to the fluoride channel Fluc/FEX (TC 1.A.43) family.

It is found in the cell inner membrane. The catalysed reaction is fluoride(in) = fluoride(out). Na(+) is not transported, but it plays an essential structural role and its presence is essential for fluoride channel function. In terms of biological role, fluoride-specific ion channel. Important for reducing fluoride concentration in the cell, thus reducing its toxicity. This is Fluoride-specific ion channel FluC from Pseudomonas putida (strain ATCC 700007 / DSM 6899 / JCM 31910 / BCRC 17059 / LMG 24140 / F1).